The sequence spans 202 residues: LexA repressor (202 aa).

A DNA-binding region (H-T-H motif) is located at residues 28–48 (RAEIAQQLGFRSPNAAEEHLK). Residues Ser119 and Lys156 each act as for autocatalytic cleavage activity in the active site.

Belongs to the peptidase S24 family. In terms of assembly, homodimer.

It catalyses the reaction Hydrolysis of Ala-|-Gly bond in repressor LexA.. Its function is as follows. Represses a number of genes involved in the response to DNA damage (SOS response), including recA and lexA. Binds to the 16 bp palindromic sequence 5'-CTGTATATATATACAG-3'. In the presence of single-stranded DNA, RecA interacts with LexA causing an autocatalytic cleavage which disrupts the DNA-binding part of LexA, leading to derepression of the SOS regulon and eventually DNA repair. The sequence is that of LexA repressor from Pectobacterium carotovorum subsp. carotovorum (strain PC1).